The following is a 1520-amino-acid chain: Integrator complex subunit 3 homolog (1520 aa).

6 disordered regions span residues 1–23 (MMNQQQQQQQPPTTSPTQQQQLT), 523–671 (QLHS…NSRV), 689–801 (VISQ…SPST), 813–922 (DEPP…QNIK), 1116–1177 (FSNS…NITN), and 1489–1520 (QSSNIKNDNNPTLSKHQNSDDDSNPKKRFRKE). 2 stretches are compositionally biased toward low complexity: residues 527–549 (QQQQLQQQQLQQPQQPQQQQQPP) and 557–595 (QPINKQLPLQMSPQQQSQQQLQQQQLQQQLQQQQQQQQP). Positions 596–612 (PQQPPPQQQPQQQPPQQ) are enriched in pro residues. Low complexity predominate over residues 613–625 (QPQQQPQQQQPQL). The span at 626 to 639 (NISTGNLPNIQQPM) shows a compositional bias: polar residues. Low complexity-rich tracts occupy residues 642-669 (SPPLSSNTLVSPTSSSSPTSSNLPTNNS), 694-717 (PQSQQTPSLHSSSQSVLQQKSPPL), and 725-735 (QQQPSQQLPSQ). The span at 736 to 752 (IVKNSPPNLSMTNENIS) shows a compositional bias: polar residues. Residues 768 to 789 (SPLINSSNSNITTPNPDSQSQI) are compositionally biased toward low complexity. Residues 819-828 (SKSSPTQSNI) are compositionally biased toward polar residues. Residues 837–882 (PPQTTISSSSPLLQPQTQPQPQTQPQPQTLQQSTTPSLSSSSTPTI) are compositionally biased toward low complexity. Pro residues predominate over residues 898–918 (QPPPPPPSSQPLQPPPPPPPS). 2 stretches are compositionally biased toward low complexity: residues 1116–1130 (FSNSDDNESTNNNNN) and 1137–1177 (QQQQ…NITN). Polar residues predominate over residues 1489-1504 (QSSNIKNDNNPTLSKH).

The protein belongs to the Integrator subunit 3 family. In terms of assembly, component of the Integrator complex. The core complex associates with protein phosphatase 2A subunits, to form the Integrator-PP2A (INTAC) complex. Component of the SOSS complex.

It is found in the nucleus. Its subcellular location is the cytoplasm. In terms of biological role, component of the integrator complex, a multiprotein complex that terminates RNA polymerase II (Pol II) transcription in the promoter-proximal region of genes. The integrator complex provides a quality checkpoint during transcription elongation by driving premature transcription termination of transcripts that are unfavorably configured for transcriptional elongation: the complex terminates transcription by (1) catalyzing dephosphorylation of the C-terminal domain (CTD) of Pol II subunit polr2a, (2) degrading the exiting nascent RNA transcript via endonuclease activity and (3) promoting the release of Pol II from bound DNA. The integrator complex is also involved in terminating the synthesis of non-coding Pol II transcripts, such as enhancer RNAs (eRNAs), small nuclear RNAs (snRNAs), telomerase RNAs and long non-coding RNAs (lncRNAs). Functionally, component of the SOSS complex, a multiprotein complex that functions downstream of the MRN complex to promote DNA repair and G2/M checkpoint. The SOSS complex associates with single-stranded DNA at DNA lesions and influences diverse endpoints in the cellular DNA damage response including cell-cycle checkpoint activation, recombinational repair and maintenance of genomic stability. The SOSS complex is required for efficient homologous recombination-dependent repair of double-strand breaks (DSBs) and ATM-dependent signaling pathways. In the SOSS complex, it is required for the assembly of the complex and for stabilization of the complex at DNA damage sites. This is Integrator complex subunit 3 homolog (ints3) from Dictyostelium discoideum (Social amoeba).